The chain runs to 366 residues: 3-dehydroquinate synthase (366 aa).

Residues 107 to 111 (GVIGD), 131 to 132 (TT), lysine 144, and lysine 153 contribute to the NAD(+) site. The Zn(2+) site is built by glutamate 186, histidine 251, and histidine 268.

The protein belongs to the sugar phosphate cyclases superfamily. Dehydroquinate synthase family. Co(2+) is required as a cofactor. Zn(2+) serves as cofactor. It depends on NAD(+) as a cofactor.

It localises to the cytoplasm. It carries out the reaction 7-phospho-2-dehydro-3-deoxy-D-arabino-heptonate = 3-dehydroquinate + phosphate. It participates in metabolic intermediate biosynthesis; chorismate biosynthesis; chorismate from D-erythrose 4-phosphate and phosphoenolpyruvate: step 2/7. In terms of biological role, catalyzes the conversion of 3-deoxy-D-arabino-heptulosonate 7-phosphate (DAHP) to dehydroquinate (DHQ). The chain is 3-dehydroquinate synthase from Microcystis aeruginosa (strain NIES-843 / IAM M-2473).